Consider the following 53-residue polypeptide: MLNVEVPTIGVSLIFLAYDEALALMTFIAVNAVLSLILIRAVILDAEYKENNQ.

The helical transmembrane segment at 24 to 44 threads the bilayer; the sequence is LMTFIAVNAVLSLILIRAVIL.

It localises to the membrane. This is an uncharacterized protein from Methanocaldococcus jannaschii (strain ATCC 43067 / DSM 2661 / JAL-1 / JCM 10045 / NBRC 100440) (Methanococcus jannaschii).